A 274-amino-acid polypeptide reads, in one-letter code: Triosephosphate isomerase (274 aa).

31-33 (NWK) is a binding site for substrate. His-118 (electrophile) is an active-site residue. Glu-188 (proton acceptor) is an active-site residue. Substrate is bound by residues Gly-194, Ser-234, and 255 to 256 (GG).

The protein belongs to the triosephosphate isomerase family. In terms of assembly, homodimer.

It localises to the cytoplasm. It carries out the reaction D-glyceraldehyde 3-phosphate = dihydroxyacetone phosphate. The protein operates within carbohydrate biosynthesis; gluconeogenesis. It functions in the pathway carbohydrate degradation; glycolysis; D-glyceraldehyde 3-phosphate from glycerone phosphate: step 1/1. Its function is as follows. Involved in the gluconeogenesis. Catalyzes stereospecifically the conversion of dihydroxyacetone phosphate (DHAP) to D-glyceraldehyde-3-phosphate (G3P). The polypeptide is Triosephosphate isomerase (Chlamydia trachomatis serovar D (strain ATCC VR-885 / DSM 19411 / UW-3/Cx)).